Consider the following 111-residue polypeptide: MESKFAHIIVFFLLATSFETLMARKEIDGPEVIELLKEFDSNLMCEGKQMWPELIGVPTKLAKEIIEKENPSITNIPILLSGSPITLDYLCDRVRLFDNILGFVVQMPVVT.

Positions 1 to 23 (MESKFAHIIVFFLLATSFETLMA) are cleaved as a signal peptide. The propeptide occupies 24-36 (RKEIDGPEVIELL).

The protein belongs to the protease inhibitor I13 (potato type I serine protease inhibitor) family.

It is found in the secreted. This is Wound-induced proteinase inhibitor 1 (PIIF) from Solanum lycopersicum (Tomato).